Consider the following 582-residue polypeptide: tRNA(Ile)-lysidine synthase (582 aa).

46 to 51 lines the ATP pocket; sequence SGGADS. The CMP/dCMP-type deaminase domain maps to 402–525; that stretch reads DPLHAAMGEA…DLLADHWGWR (124 aa). A disordered region spans residues 548–582; it reads VRRRSADTPQTPNAETPAPRSSRSTSASGKPTMLE. Over residues 563-575 the composition is skewed to low complexity; sequence TPAPRSSRSTSAS.

It belongs to the tRNA(Ile)-lysidine synthase family.

It localises to the cytoplasm. The enzyme catalyses cytidine(34) in tRNA(Ile2) + L-lysine + ATP = lysidine(34) in tRNA(Ile2) + AMP + diphosphate + H(+). In terms of biological role, ligates lysine onto the cytidine present at position 34 of the AUA codon-specific tRNA(Ile) that contains the anticodon CAU, in an ATP-dependent manner. Cytidine is converted to lysidine, thus changing the amino acid specificity of the tRNA from methionine to isoleucine. The sequence is that of tRNA(Ile)-lysidine synthase from Deinococcus radiodurans (strain ATCC 13939 / DSM 20539 / JCM 16871 / CCUG 27074 / LMG 4051 / NBRC 15346 / NCIMB 9279 / VKM B-1422 / R1).